Consider the following 302-residue polypeptide: Glutamyl-Q tRNA(Asp) synthetase (302 aa).

Residues 13-17 (RFAPS) and Asp-49 each bind L-glutamate. A 'HIGH' region motif is present at residues 16-26 (PSPTGPLHLGS). Zn(2+) contacts are provided by Cys-105, Cys-107, Tyr-119, and Cys-123. Residues Tyr-178 and Arg-196 each contribute to the L-glutamate site. Residues 234 to 238 (KLSKQ) carry the 'KMSKS' region motif. Residue Lys-237 coordinates ATP.

This sequence belongs to the class-I aminoacyl-tRNA synthetase family. GluQ subfamily. Requires Zn(2+) as cofactor.

Its function is as follows. Catalyzes the tRNA-independent activation of glutamate in presence of ATP and the subsequent transfer of glutamate onto a tRNA(Asp). Glutamate is transferred on the 2-amino-5-(4,5-dihydroxy-2-cyclopenten-1-yl) moiety of the queuosine in the wobble position of the QUC anticodon. The protein is Glutamyl-Q tRNA(Asp) synthetase of Methylococcus capsulatus (strain ATCC 33009 / NCIMB 11132 / Bath).